A 130-amino-acid chain; its full sequence is Small ribosomal subunit protein uS9 (130 aa).

It belongs to the universal ribosomal protein uS9 family.

The polypeptide is Small ribosomal subunit protein uS9 (Hahella chejuensis (strain KCTC 2396)).